We begin with the raw amino-acid sequence, 299 residues long: Deoxyribonuclease-1-like 2 (299 aa).

Residues 1–20 (MGGPRALLAALWALEAAGTA) form the signal peptide. Residues glutamate 99 and histidine 170 contribute to the active site. Cysteine 209 and cysteine 245 are disulfide-bonded.

This sequence belongs to the DNase I family. Mg(2+) is required as a cofactor. It depends on Ca(2+) as a cofactor. As to expression, preferentially expressed in the skin and up-regulated during keratinocytes differentiation. Highly abundant (at protein level) in the stratum granulosum.

It localises to the cytoplasm. The protein resides in the secreted. Its function is as follows. Divalent cation-dependent acid DNA endonuclease involved in the breakdown of the nucleus during corneocyte formation of epidermal keratinocytes. May play an immune role by eliminating harmful DNA released into the extracellular environment by damaged epidermal cells. The protein is Deoxyribonuclease-1-like 2 (DNASE1L2) of Homo sapiens (Human).